Consider the following 368-residue polypeptide: 2-deoxy-scyllo-inosose synthase (368 aa).

Residues Asp-42, 72–75 (EEYK), 104–108 (GLTGN), 128–129 (TT), 139–141 (SIK), 150–151 (KN), and Gln-176 contribute to the NAD(+) site. The active site involves Lys-141. Glu-183 contributes to the Co(2+) binding site. Glu-243 is an active-site residue. His-246 and His-262 together coordinate Co(2+).

It belongs to the sugar phosphate cyclases superfamily. DOI synthase family. In terms of assembly, was isolated as a heterodimeric enzyme comprising of BtrC and a smaller polypeptide further identified as PdxT by sequence homology. Homodimer in solution. NAD(+) serves as cofactor. The cofactor is Co(2+).

It carries out the reaction D-glucose 6-phosphate = 2-deoxy-L-scyllo-inosose + phosphate. Its pathway is metabolic intermediate biosynthesis; 2-deoxystreptamine biosynthesis; 2-deoxystreptamine from D-glucose 6-phosphate: step 1/4. It participates in antibiotic biosynthesis; butirosin biosynthesis. Its activity is regulated as follows. Strongly inhibited by EDTA, zinc and Cu(2+). Catalyzes the intramolecular carbocycle formation from D-glucose-6-phosphate to 2-deoxy-scyllo-inosose (DOI). This chain is 2-deoxy-scyllo-inosose synthase (btrC), found in Niallia circulans (Bacillus circulans).